We begin with the raw amino-acid sequence, 854 residues long: DNA mismatch repair protein MutS (854 aa).

616-623 (GPNMGGKS) contacts ATP.

This sequence belongs to the DNA mismatch repair MutS family.

Functionally, this protein is involved in the repair of mismatches in DNA. It is possible that it carries out the mismatch recognition step. This protein has a weak ATPase activity. The sequence is that of DNA mismatch repair protein MutS from Pectobacterium atrosepticum (strain SCRI 1043 / ATCC BAA-672) (Erwinia carotovora subsp. atroseptica).